The primary structure comprises 645 residues: Beta-galactosidase (645 aa).

Residue arginine 102 coordinates substrate. A Zn(2+)-binding site is contributed by cysteine 106. A substrate-binding site is contributed by asparagine 140. Catalysis depends on glutamate 141, which acts as the Proton donor. Zn(2+) contacts are provided by cysteine 150, cysteine 152, and cysteine 155. The active-site Nucleophile is glutamate 312. Residues tryptophan 320 and 360–363 (EQMH) contribute to the substrate site.

It belongs to the glycosyl hydrolase 42 family. In terms of assembly, homotrimer.

The catalysed reaction is Hydrolysis of terminal non-reducing beta-D-galactose residues in beta-D-galactosides.. Its activity is regulated as follows. Inhibited by Cu(2+) and Fe(2+), and moderately activated by divalent cations such as Co(2+), Mn(2+) and Zn(2+). Considerably activated by dithiothreitol, beta-mercaptoethanol and cysteine. The chain is Beta-galactosidase from Thermus thermophilus.